We begin with the raw amino-acid sequence, 33 residues long: MPRRRRSSSRPVRRRRRPRVSRRRRRRGGRRRR.

The tract at residues 1-33 (MPRRRRSSSRPVRRRRRPRVSRRRRRRGGRRRR) is disordered.

In terms of tissue distribution, testis.

It is found in the nucleus. The protein resides in the chromosome. Protamines substitute for histones in the chromatin of sperm during the haploid phase of spermatogenesis. They compact sperm DNA into a highly condensed, stable and inactive complex. The chain is Protamine from Oncorhynchus keta (Chum salmon).